The chain runs to 865 residues: Leucine--tRNA ligase (865 aa).

The 'HIGH' region signature appears at proline 58 to histidine 68. A 'KMSKS' region motif is present at residues lysine 629–serine 633. Lysine 632 provides a ligand contact to ATP.

It belongs to the class-I aminoacyl-tRNA synthetase family.

The protein localises to the cytoplasm. It catalyses the reaction tRNA(Leu) + L-leucine + ATP = L-leucyl-tRNA(Leu) + AMP + diphosphate. This is Leucine--tRNA ligase from Synechococcus sp. (strain ATCC 27144 / PCC 6301 / SAUG 1402/1) (Anacystis nidulans).